Consider the following 431-residue polypeptide: MKQYIEIIDVVARQILDSRCFPTVEVEVYLEDGTVGRAAVPSGASTGIYEAVELRDGDKDKYLGKGVEKAVANVNDTIAEEIIGLNVLDQAYIDKTLIELDGTNNKGKLGANAILGVSLAVAQAAANYLGMPLYQYIGGVNAKVLPVPMMNIINGGSHADNSVDIQEFMIMPVGFDCFERAVRACAEVYHALKKTLNSKGYSTGVGDEGGFAPNLKSNAEAIEVILEAIEKAGYEPGKEFFIAIDAASSEYYKDGKYVLEHEGKTLTAAEMVDFFEDWVNKYPIISIEDGMAEEDWEGWKLMTERLGKKVQLVGDDLFVTNTERLKTGIEKGIANSILIKLNQIGTLTETLNAIEMANRAGYTAVVSHRSGETEDTTIADLVVAVNAGQIKTGAPARSERVAKYNQLIRINEELGEVAEYRGRNAFFNLSK.

(2R)-2-phosphoglycerate is bound at residue glutamine 166. The Proton donor role is filled by glutamate 208. Residues aspartate 245, glutamate 288, and aspartate 315 each contribute to the Mg(2+) site. Lysine 340, arginine 369, serine 370, and lysine 391 together coordinate (2R)-2-phosphoglycerate. Residue lysine 340 is the Proton acceptor of the active site.

The protein belongs to the enolase family. The cofactor is Mg(2+).

It is found in the cytoplasm. The protein resides in the secreted. Its subcellular location is the cell surface. The enzyme catalyses (2R)-2-phosphoglycerate = phosphoenolpyruvate + H2O. Its pathway is carbohydrate degradation; glycolysis; pyruvate from D-glyceraldehyde 3-phosphate: step 4/5. In terms of biological role, catalyzes the reversible conversion of 2-phosphoglycerate (2-PG) into phosphoenolpyruvate (PEP). It is essential for the degradation of carbohydrates via glycolysis. The chain is Enolase from Clostridium perfringens (strain 13 / Type A).